Consider the following 427-residue polypeptide: Dihydroorotase (427 aa).

The Zn(2+) site is built by H58 and H60. Substrate is bound by residues 60-62 and N92; that span reads HLR. Zn(2+) contacts are provided by D150, H177, and H230. N276 provides a ligand contact to substrate. Zn(2+) is bound at residue D303. D303 is a catalytic residue. Residues H307 and 321-322 contribute to the substrate site; that span reads FG.

Belongs to the metallo-dependent hydrolases superfamily. DHOase family. Class I DHOase subfamily. Zn(2+) serves as cofactor.

It catalyses the reaction (S)-dihydroorotate + H2O = N-carbamoyl-L-aspartate + H(+). It participates in pyrimidine metabolism; UMP biosynthesis via de novo pathway; (S)-dihydroorotate from bicarbonate: step 3/3. Its function is as follows. Catalyzes the reversible cyclization of carbamoyl aspartate to dihydroorotate. The polypeptide is Dihydroorotase (Macrococcus caseolyticus (strain JCSC5402) (Macrococcoides caseolyticum)).